Here is an 87-residue protein sequence, read N- to C-terminus: Monogrin 1 (87 aa).

One can recognise a BPTI/Kunitz inhibitor domain in the interval 8 to 62 (CGYLMMRGCRGDTTATRAWGFNYEEKKCQQETVICGTGGAPRNAFETKQDCDALC). 3 cysteine pairs are disulfide-bonded: Cys8-Cys62, Cys16-Cys42, and Cys35-Cys58. The short motif at 17-19 (RGD) is the Cell attachment site element.

In terms of processing, the N-terminus is blocked. Expressed in salivary glands.

The protein localises to the cytoplasmic vesicle. Its subcellular location is the secretory vesicle. It localises to the secreted. Tick salivary platelet aggregation inhibitor that plays an important part in the anti-hemostatic strategy of ticks. Inhibits platelet aggregation induced by ADP (IC(50)~150 nM), collagen, and platelet activating factor (PAF). Acts by binding to platelet membrane glycoprotein IIb-IIIa (ITGA2B/ITGB3) in a metal ion dependent manner. Does not inhibit aggregation induced by ristocecin, an agonist that aggregates platelets independently from the glycoprotein IIb-IIIa (ITGA2B/ITGB3). In contrast to other tick platelet aggregation inhibitors, this protein does not protect ITGA2B/ITGB3 from dissociation under SDS condition, suggesting it may dissocate much faster than its orthologs. This chain is Monogrin 1, found in Argas monolakensis (Mono lake bird tick).